The primary structure comprises 3527 residues: BEACH domain-containing protein A2 (3527 aa).

Disordered stretches follow at residues 25–46, 385–423, and 454–490; these read AGEAISDPTTPPSSSQASPSSS, SSPHKNRGSNDSKKQPPLSLKTRQNDDSEKQQSLSLNSR, and ESSGTSTSLLSQTKLTGYSRRQTPSANNRYDEPCEQG. Positions 28–46 are enriched in low complexity; that stretch reads AISDPTTPPSSSQASPSSS. Residues 455 to 469 are compositionally biased toward low complexity; the sequence is SSGTSTSLLSQTKLT. Positions 472 to 481 are enriched in polar residues; that stretch reads SRRQTPSANN. LRR repeat units lie at residues 1447-1470, 1499-1522, 1542-1565, 1566-1588, and 2001-2024; these read KLESGQTTISMSPTEIIPENNYED, FSHLSELEMGDNPVETSNCIVLSN, SIQIASLGFLENLISILWYRSHNL, AILRQINLVKHLLVTLQRGDVEV, and SSEMKSLDLTGSSSQVQPIDSRSS. Disordered stretches follow at residues 1992–2023 and 2046–2081; these read GDHVGSVSASSEMKSLDLTGSSSQVQPIDSRS and IPSPSKSSTISTPHPSHISVSEFDASSDQSSGSQGS. The span at 1998-2020 shows a compositional bias: polar residues; that stretch reads VSASSEMKSLDLTGSSSQVQPID. LRR repeat units follow at residues 2128-2151, 2221-2247, and 2313-2336; these read TEQIKAVQALESILEMLPLYVDPE, LLSILQLANKDGRVEEVTSSGKGLLSI, and VSAVLQLLVANKNIILCPSNLDTD. A disordered region spans residues 2658-2680; sequence VNTDEKSETGSPIKSSSGKMDEI. A compositionally biased stretch (polar residues) spans 2666 to 2675; sequence TGSPIKSSSG. A BEACH-type PH domain is found at 2704 to 2871; sequence EHLEKIRFRY…EREEVFRNLL (168 aa). The 293-residue stretch at 2896 to 3188 folds into the BEACH domain; that stretch reads GSRLFKLMAK…QLFQKPHVKR (293 aa). WD repeat units lie at residues 3272 to 3311, 3322 to 3361, 3410 to 3451, and 3483 to 3522; these read HEGNQIQCAGVSHDGRIVVTGAEDGLVSVWRVSKDGPRGS, AHTAKVICLRVSQPYMMIASSSDDCTVIIWDLSSLSFVRQ, DLIV…DPVS, and FHKQPVTSLHLTTDLKQLLSGDSAGHLLSWTVPDEILKAS.

The sequence is that of BEACH domain-containing protein A2 from Arabidopsis thaliana (Mouse-ear cress).